Consider the following 261-residue polypeptide: 5'-nucleotidase SurE (261 aa).

Positions 8, 9, 43, and 96 each coordinate a divalent metal cation.

Belongs to the SurE nucleotidase family. Requires a divalent metal cation as cofactor.

The protein resides in the cytoplasm. It catalyses the reaction a ribonucleoside 5'-phosphate + H2O = a ribonucleoside + phosphate. Its function is as follows. Nucleotidase that shows phosphatase activity on nucleoside 5'-monophosphates. The polypeptide is 5'-nucleotidase SurE (Cereibacter sphaeroides (strain ATCC 17025 / ATH 2.4.3) (Rhodobacter sphaeroides)).